We begin with the raw amino-acid sequence, 219 residues long: MAFLLHQARFYTTVNHLRDLPPTVQPEIAFAGRSNAGKSTAINVLCNQKRLAFASKTPGRTQHINYFSVGPAAEPVANLVDLPGYGYAEVPGAAKAHWEMLLSSYLATRSQLCGLILMMDSRRPLTDLDRRMIEWFVPTGKPIHTLLTKCDKLTRQESINALRNTQKGLDAYREQGVKGKLTVQLFSALKRTGLDEAHELIESWVRPSVADEKSEPVAQ.

The EngB-type G domain occupies valine 24–proline 207. GTP-binding positions include glycine 32 to serine 39, glycine 59 to histidine 63, aspartate 81 to glycine 84, threonine 148 to aspartate 151, and phenylalanine 186 to alanine 188. Residues serine 39 and threonine 61 each contribute to the Mg(2+) site.

Belongs to the TRAFAC class TrmE-Era-EngA-EngB-Septin-like GTPase superfamily. EngB GTPase family. Requires Mg(2+) as cofactor.

Necessary for normal cell division and for the maintenance of normal septation. The chain is Probable GTP-binding protein EngB from Burkholderia ambifaria (strain MC40-6).